Consider the following 241-residue polypeptide: Uridylate kinase (241 aa).

Residue 15–18 coordinates ATP; sequence KLSG. The segment at 23–28 is involved in allosteric activation by GTP; the sequence is GTEGFG. G57 is a binding site for UMP. Positions 58 and 62 each coordinate ATP. UMP contacts are provided by residues D77 and 138–145; that span reads TGNPFFTT. The ATP site is built by T165, F171, and D174.

The protein belongs to the UMP kinase family. Homohexamer.

The protein resides in the cytoplasm. The catalysed reaction is UMP + ATP = UDP + ADP. Its pathway is pyrimidine metabolism; CTP biosynthesis via de novo pathway; UDP from UMP (UMPK route): step 1/1. Its activity is regulated as follows. Allosterically activated by GTP. Inhibited by UTP. In terms of biological role, catalyzes the reversible phosphorylation of UMP to UDP. This Salmonella choleraesuis (strain SC-B67) protein is Uridylate kinase.